The chain runs to 168 residues: Mediator of RNA polymerase II transcription subunit 7a (168 aa).

2 coiled-coil regions span residues lysine 64–leucine 92 and isoleucine 132–aspartate 166.

This sequence belongs to the Mediator complex subunit 7 family. As to quaternary structure, component of the Mediator complex. Interacts with MEE14/CBP1.

It localises to the nucleus. Component of the Mediator complex, a coactivator involved in the regulated transcription of nearly all RNA polymerase II-dependent genes. Mediator functions as a bridge to convey information from gene-specific regulatory proteins to the basal RNA polymerase II transcription machinery. The Mediator complex, having a compact conformation in its free form, is recruited to promoters by direct interactions with regulatory proteins and serves for the assembly of a functional pre-initiation complex with RNA polymerase II and the general transcription factors. This Arabidopsis thaliana (Mouse-ear cress) protein is Mediator of RNA polymerase II transcription subunit 7a (MED7A).